The chain runs to 651 residues: DNA mismatch repair protein MutL (651 aa).

This sequence belongs to the DNA mismatch repair MutL/HexB family.

In terms of biological role, this protein is involved in the repair of mismatches in DNA. It is required for dam-dependent methyl-directed DNA mismatch repair. May act as a 'molecular matchmaker', a protein that promotes the formation of a stable complex between two or more DNA-binding proteins in an ATP-dependent manner without itself being part of a final effector complex. This Streptococcus mutans serotype c (strain ATCC 700610 / UA159) protein is DNA mismatch repair protein MutL.